The following is a 300-amino-acid chain: Glycine--tRNA ligase alpha subunit (300 aa).

This sequence belongs to the class-II aminoacyl-tRNA synthetase family. In terms of assembly, tetramer of two alpha and two beta subunits.

It localises to the cytoplasm. It carries out the reaction tRNA(Gly) + glycine + ATP = glycyl-tRNA(Gly) + AMP + diphosphate. The sequence is that of Glycine--tRNA ligase alpha subunit from Prochlorococcus marinus (strain MIT 9313).